The following is a 340-amino-acid chain: Glyceraldehyde-3-phosphate dehydrogenase (340 aa).

Residues 12 to 13, D40, K85, and S128 each bind NAD(+); that span reads RI. Residues 158–160, T189, R204, 217–218, and R240 each bind D-glyceraldehyde 3-phosphate; these read SCT and TG. C159 acts as the Nucleophile in catalysis. K257 is covalently cross-linked (Isoglutamyl lysine isopeptide (Lys-Gln) (interchain with Q-Cter in protein Pup)). Position 321 (N321) interacts with NAD(+).

Belongs to the glyceraldehyde-3-phosphate dehydrogenase family. As to quaternary structure, homotetramer.

The protein localises to the cytoplasm. It catalyses the reaction D-glyceraldehyde 3-phosphate + phosphate + NAD(+) = (2R)-3-phospho-glyceroyl phosphate + NADH + H(+). It participates in carbohydrate degradation; glycolysis; pyruvate from D-glyceraldehyde 3-phosphate: step 1/5. Catalyzes the oxidative phosphorylation of glyceraldehyde 3-phosphate (G3P) to 1,3-bisphosphoglycerate (BPG) using the cofactor NAD. The first reaction step involves the formation of a hemiacetal intermediate between G3P and a cysteine residue, and this hemiacetal intermediate is then oxidized to a thioester, with concomitant reduction of NAD to NADH. The reduced NADH is then exchanged with the second NAD, and the thioester is attacked by a nucleophilic inorganic phosphate to produce BPG. The sequence is that of Glyceraldehyde-3-phosphate dehydrogenase (gapA) from Mycolicibacterium smegmatis (strain ATCC 700084 / mc(2)155) (Mycobacterium smegmatis).